Reading from the N-terminus, the 318-residue chain is NADH-ubiquinone oxidoreductase chain 1 (318 aa).

The next 8 helical transmembrane spans lie at 2-22 (FMIN…FLTL), 70-90 (MFII…IPLP), 100-120 (LGIL…LWSG), 147-167 (AIIL…TLII), 171-191 (YLWL…STLA), 217-237 (AGPF…MNIF), 253-273 (ELYS…FLWI), and 294-314 (LPLT…LSSI).

Belongs to the complex I subunit 1 family. Core subunit of respiratory chain NADH dehydrogenase (Complex I) which is composed of 45 different subunits.

The protein localises to the mitochondrion inner membrane. The catalysed reaction is a ubiquinone + NADH + 5 H(+)(in) = a ubiquinol + NAD(+) + 4 H(+)(out). In terms of biological role, core subunit of the mitochondrial membrane respiratory chain NADH dehydrogenase (Complex I) which catalyzes electron transfer from NADH through the respiratory chain, using ubiquinone as an electron acceptor. Essential for the catalytic activity and assembly of complex I. This Equus caballus (Horse) protein is NADH-ubiquinone oxidoreductase chain 1 (MT-ND1).